The following is a 609-amino-acid chain: Glutamine--fructose-6-phosphate aminotransferase [isomerizing] (609 aa).

The active-site Nucleophile; for GATase activity is the cysteine 2. Residues 2-218 (CGIVGAIAQR…EGDIAEITRR (217 aa)) form the Glutamine amidotransferase type-2 domain. 2 consecutive SIS domains span residues 286–426 (ADEL…LKGL) and 458–599 (LAED…VDQP). Lysine 604 (for Fru-6P isomerization activity) is an active-site residue.

As to quaternary structure, homodimer.

Its subcellular location is the cytoplasm. It catalyses the reaction D-fructose 6-phosphate + L-glutamine = D-glucosamine 6-phosphate + L-glutamate. In terms of biological role, catalyzes the first step in hexosamine metabolism, converting fructose-6P into glucosamine-6P using glutamine as a nitrogen source. This Escherichia coli O6:H1 (strain CFT073 / ATCC 700928 / UPEC) protein is Glutamine--fructose-6-phosphate aminotransferase [isomerizing].